Here is an 850-residue protein sequence, read N- to C-terminus: Trimethylamine-N-oxide reductase (850 aa).

Positions 1-39 form a signal peptide, tat-type signal; that stretch reads MKNKDSLHVSRRRFLAQLGGLTVAGMLGPSLLTPRSARA. Position 191 (serine 191) interacts with Mo-bis(molybdopterin guanine dinucleotide).

It belongs to the prokaryotic molybdopterin-containing oxidoreductase family. Mo-bis(molybdopterin guanine dinucleotide) serves as cofactor. In terms of processing, predicted to be exported by the Tat system. The position of the signal peptide cleavage has not been experimentally proven.

The protein resides in the periplasm. It carries out the reaction trimethylamine + 2 Fe(III)-[cytochrome c] + H2O = trimethylamine N-oxide + 2 Fe(II)-[cytochrome c] + 3 H(+). Reduces trimethylamine-N-oxide (TMAO) into trimethylamine; an anaerobic reaction coupled to energy-yielding reactions. In Salmonella typhimurium (strain LT2 / SGSC1412 / ATCC 700720), this protein is Trimethylamine-N-oxide reductase (torA).